The following is a 420-amino-acid chain: Glucose-1-phosphate adenylyltransferase (420 aa).

Residues tyrosine 107, glycine 173, 188-189 (EK), and serine 206 contribute to the alpha-D-glucose 1-phosphate site.

Belongs to the bacterial/plant glucose-1-phosphate adenylyltransferase family. As to quaternary structure, homotetramer.

The enzyme catalyses alpha-D-glucose 1-phosphate + ATP + H(+) = ADP-alpha-D-glucose + diphosphate. The protein operates within glycan biosynthesis; glycogen biosynthesis. Its function is as follows. Involved in the biosynthesis of ADP-glucose, a building block required for the elongation reactions to produce glycogen. Catalyzes the reaction between ATP and alpha-D-glucose 1-phosphate (G1P) to produce pyrophosphate and ADP-Glc. In Shewanella sp. (strain W3-18-1), this protein is Glucose-1-phosphate adenylyltransferase.